The following is a 227-amino-acid chain: PKHD-type hydroxylase A1S_0473 (227 aa).

The 101-residue stretch at 78–178 (KIIPPLFNRY…RFASFFWVQS (101 aa)) folds into the Fe2OG dioxygenase domain. Fe cation is bound by residues histidine 96, aspartate 98, and histidine 159. Arginine 169 is a binding site for 2-oxoglutarate.

Fe(2+) serves as cofactor. It depends on L-ascorbate as a cofactor.

In Acinetobacter baumannii (strain ATCC 17978 / DSM 105126 / CIP 53.77 / LMG 1025 / NCDC KC755 / 5377), this protein is PKHD-type hydroxylase A1S_0473.